The primary structure comprises 105 residues: Probable molt-inhibiting hormone (105 aa).

The signal sequence occupies residues Met1 to Ala28. Cystine bridges form between Cys35/Cys72, Cys52/Cys68, and Cys55/Cys81.

This sequence belongs to the arthropod CHH/MIH/GIH/VIH hormone family. Expressed in the postmolt, intermolt, and premolt stages of the shrimp eyestalks and the brain.

It is found in the secreted. Its function is as follows. Inhibits Y-organs where molting hormone (ecdysteroid) is secreted. A molting cycle is initiated when MIH secretion diminishes or stops. The sequence is that of Probable molt-inhibiting hormone from Metapenaeus ensis (Greasyback shrimp).